Consider the following 289-residue polypeptide: Shikimate dehydrogenase (NADP(+)) (289 aa).

Shikimate contacts are provided by residues 20 to 22 (SIS) and serine 67. The active-site Proton acceptor is the lysine 71. An NADP(+)-binding site is contributed by aspartate 83. 2 residues coordinate shikimate: asparagine 92 and aspartate 107. NADP(+) contacts are provided by residues 132–136 (GGGGA) and valine 230. Shikimate is bound at residue tyrosine 232. Glycine 253 contacts NADP(+).

This sequence belongs to the shikimate dehydrogenase family. Homodimer.

The enzyme catalyses shikimate + NADP(+) = 3-dehydroshikimate + NADPH + H(+). The protein operates within metabolic intermediate biosynthesis; chorismate biosynthesis; chorismate from D-erythrose 4-phosphate and phosphoenolpyruvate: step 4/7. In terms of biological role, involved in the biosynthesis of the chorismate, which leads to the biosynthesis of aromatic amino acids. Catalyzes the reversible NADPH linked reduction of 3-dehydroshikimate (DHSA) to yield shikimate (SA). The polypeptide is Shikimate dehydrogenase (NADP(+)) (Streptococcus suis (strain 98HAH33)).